We begin with the raw amino-acid sequence, 431 residues long: Protein translocase subunit SecY (431 aa).

The Cytoplasmic portion of the chain corresponds to 1–17 (MFKTISNFMRVSDIRNK). A helical transmembrane segment spans residues 18-38 (IIFTLLMLIVFRIGAFIPVPY). Residues 39–66 (VNAEALQAQSQMGVFDLLNTFGGGALYQ) lie on the Extracellular side of the membrane. Residues 67-87 (FSIFAMGITPYITASIIIQLL) form a helical membrane-spanning segment. Residues 88–115 (QMDVVPKFTEWSKQGEVGRRKLAQFTRY) are Cytoplasmic-facing. The chain crosses the membrane as a helical span at residues 116-136 (FTIVLGFIQALGMSYGFNNLA). The Extracellular segment spans residues 137–145 (NGMLIEKSG). The helical transmembrane segment at 146–166 (VSTYLIIALVLTGGTAFLMWL) threads the bilayer. At 167–177 (GEQITSHGVGN) the chain is on the cytoplasmic side. Residues 178–198 (GISIIIFAGIVSSIPKTIGQI) traverse the membrane as a helical segment. The Extracellular segment spans residues 199 to 213 (YETQFVGSNDQLFIH). Residues 214 to 234 (IVKVALLVIAILAVIVGVIFI) traverse the membrane as a helical segment. The Cytoplasmic segment spans residues 235 to 261 (QQAVRKIAIQYAKGTGRSPAGGGQSTH). Residues 262–282 (LPLKVNPAGVIPVIFAVAFLI) traverse the membrane as a helical segment. Residues 283 to 308 (TPRTIASFFGTNDVTKWIQNNFDNTH) lie on the Extracellular side of the membrane. Residues 309 to 329 (PVGMAIYVALIIAFTYFYAFV) traverse the membrane as a helical segment. The Cytoplasmic segment spans residues 330 to 368 (QVNPEQMADNLKKQGGYIPGVRPGKMTQDRITSILYRLT). A run of 2 helical transmembrane segments spans residues 369–389 (FVGS…IQFA) and 390–410 (GLPQ…GVAL). The Cytoplasmic segment spans residues 411 to 431 (ETMKQLESQLVKRNYRGFMKN).

The protein belongs to the SecY/SEC61-alpha family. In terms of assembly, component of the Sec protein translocase complex. Heterotrimer consisting of SecY, SecE and SecG subunits. The heterotrimers can form oligomers, although 1 heterotrimer is thought to be able to translocate proteins. Interacts with the ribosome. Interacts with SecDF, and other proteins may be involved. Interacts with SecA. Interacts with FloT.

It is found in the cell membrane. The protein resides in the membrane raft. In terms of biological role, the central subunit of the protein translocation channel SecYEG. Consists of two halves formed by TMs 1-5 and 6-10. These two domains form a lateral gate at the front which open onto the bilayer between TMs 2 and 7, and are clamped together by SecE at the back. The channel is closed by both a pore ring composed of hydrophobic SecY resides and a short helix (helix 2A) on the extracellular side of the membrane which forms a plug. The plug probably moves laterally to allow the channel to open. The ring and the pore may move independently. In Bacillus subtilis (strain 168), this protein is Protein translocase subunit SecY.